The sequence spans 391 residues: F-box/kelch-repeat protein At3g16740 (391 aa).

Residues 1–47 (MVQISDLPRDLTEEVLSRIPVTSMRAVRFTCKKWNTLSKDRSFTKKH) enclose the F-box domain. Kelch repeat units lie at residues 104-154 (KIFH…YEEK) and 163-215 (ILRF…LKGN).

Part of a SCF (ASK-cullin-F-box) protein ligase complex. Interacts with ASK11.

It localises to the nucleus. The protein operates within protein modification; protein ubiquitination. Component of SCF(ASK-cullin-F-box) E3 ubiquitin ligase complexes, which may mediate the ubiquitination and subsequent proteasomal degradation of target proteins. The sequence is that of F-box/kelch-repeat protein At3g16740 from Arabidopsis thaliana (Mouse-ear cress).